Consider the following 437-residue polypeptide: Nickel-cobalt-cadmium resistance protein NccC (437 aa).

The first 48 residues, 1-48, serve as a signal peptide directing secretion; it reads MGAVLKAEANIFRSHPFRPMNQATPKKLRSAPCIGVALLLMATGSIQA.

This sequence belongs to the outer membrane factor (OMF) (TC 1.B.17) family.

Its function is as follows. Component of the NCC cation-efflux system that confers resistance to nickel, cobalt and cadmium. The polypeptide is Nickel-cobalt-cadmium resistance protein NccC (nccC) (Alcaligenes xylosoxydans xylosoxydans (Achromobacter xylosoxidans)).